The sequence spans 883 residues: Translation initiation factor IF-2 (883 aa).

Residues 118–261 (VARESEAAPA…KKKEAFKKTE (144 aa)) are disordered. Residues 124 to 150 (AAPAEEPVAAAVKPASEPPVVQKAPVA) are compositionally biased toward low complexity. Composition is skewed to basic and acidic residues over residues 183-200 (PADR…EERI) and 252-261 (KKKEAFKKTE). Residues 383–552 (KRPPVVTIMG…LLQADVMDLK (170 aa)) form the tr-type G domain. The tract at residues 392-399 (GHVDHGKT) is G1. Position 392 to 399 (392 to 399 (GHVDHGKT)) interacts with GTP. Residues 417–421 (GITQH) are G2. The tract at residues 438-441 (DTPG) is G3. Residues 438 to 442 (DTPGH) and 492 to 495 (NKID) contribute to the GTP site. Residues 492–495 (NKID) are G4. Residues 528-530 (SAK) are G5.

Belongs to the TRAFAC class translation factor GTPase superfamily. Classic translation factor GTPase family. IF-2 subfamily.

Its subcellular location is the cytoplasm. Functionally, one of the essential components for the initiation of protein synthesis. Protects formylmethionyl-tRNA from spontaneous hydrolysis and promotes its binding to the 30S ribosomal subunits. Also involved in the hydrolysis of GTP during the formation of the 70S ribosomal complex. This is Translation initiation factor IF-2 from Geobacter sulfurreducens (strain ATCC 51573 / DSM 12127 / PCA).